A 233-amino-acid polypeptide reads, in one-letter code: Coenzyme Q-binding protein COQ10 homolog, mitochondrial (233 aa).

The N-terminal 34 residues, 1-34, are a transit peptide targeting the mitochondrion; that stretch reads MAEKATSLFLRAMEISEKQSFDVMRRNSSCTIRH.

The protein belongs to the COQ10 family. In terms of assembly, interacts with coenzyme Q.

It is found in the mitochondrion inner membrane. Functionally, required for the function of coenzyme Q in the respiratory chain. May serve as a chaperone or may be involved in the transport of Q6 from its site of synthesis to the catalytic sites of the respiratory complexes. The polypeptide is Coenzyme Q-binding protein COQ10 homolog, mitochondrial (Danio rerio (Zebrafish)).